Reading from the N-terminus, the 1071-residue chain is ATP-dependent helicase/deoxyribonuclease subunit B (1071 aa).

The protein belongs to the helicase family. AddB/RexB type 2 subfamily. In terms of assembly, heterodimer of AddA and RexB. Mg(2+) serves as cofactor.

The heterodimer acts as both an ATP-dependent DNA helicase and an ATP-dependent, dual-direction single-stranded exonuclease. Recognizes the chi site generating a DNA molecule suitable for the initiation of homologous recombination. This subunit has 5' -&gt; 3' nuclease activity but not helicase activity. The polypeptide is ATP-dependent helicase/deoxyribonuclease subunit B (Streptococcus pyogenes serotype M12 (strain MGAS9429)).